Consider the following 924-residue polypeptide: Ubiquitin carboxyl-terminal hydrolase 5 (924 aa).

One can recognise a DUSP domain in the interval 15 to 145 (LSPEEERVFI…GPTLARRVIS (131 aa)). Residues 64–83 (TNDGSSLSEHCDSPGSSTLK) are compositionally biased toward polar residues. The tract at residues 64-87 (TNDGSSLSEHCDSPGSSTLKKPSR) is disordered. The 600-residue stretch at 317–916 (TGLLNLGNTC…AAYVLFYRRK (600 aa)) folds into the USP domain. Catalysis depends on Cys-326, which acts as the Nucleophile. Residues 648 to 667 (REESVGKKGNSDSSIPERRS) are compositionally biased toward basic and acidic residues. The tract at residues 648 to 690 (REESVGKKGNSDSSIPERRSARFNNTEEEDKVGGLKKAKKSNS) is disordered. Catalysis depends on His-874, which acts as the Proton acceptor.

Belongs to the peptidase C19 family.

It catalyses the reaction Thiol-dependent hydrolysis of ester, thioester, amide, peptide and isopeptide bonds formed by the C-terminal Gly of ubiquitin (a 76-residue protein attached to proteins as an intracellular targeting signal).. Its function is as follows. Recognizes and hydrolyzes the peptide bond at the C-terminal Gly of ubiquitin. Involved in the processing of poly-ubiquitin precursors as well as that of ubiquitinated proteins. The sequence is that of Ubiquitin carboxyl-terminal hydrolase 5 (UBP5) from Arabidopsis thaliana (Mouse-ear cress).